The chain runs to 196 residues: Imidazoleglycerol-phosphate dehydratase (196 aa).

This sequence belongs to the imidazoleglycerol-phosphate dehydratase family.

It is found in the cytoplasm. It catalyses the reaction D-erythro-1-(imidazol-4-yl)glycerol 3-phosphate = 3-(imidazol-4-yl)-2-oxopropyl phosphate + H2O. Its pathway is amino-acid biosynthesis; L-histidine biosynthesis; L-histidine from 5-phospho-alpha-D-ribose 1-diphosphate: step 6/9. The polypeptide is Imidazoleglycerol-phosphate dehydratase (Oleidesulfovibrio alaskensis (strain ATCC BAA-1058 / DSM 17464 / G20) (Desulfovibrio alaskensis)).